The sequence spans 248 residues: Pyridoxal 4-dehydrogenase (248 aa).

11–35 (LVTGAAQGIGKAIAARLAADGATVI) is an NAD(+) binding site. Substrate is bound at residue Ser-141. The Proton acceptor role is filled by Tyr-154.

This sequence belongs to the short-chain dehydrogenases/reductases (SDR) family. In terms of assembly, homotetramer.

It carries out the reaction pyridoxal + NAD(+) = 4-pyridoxolactone + NADH + H(+). Its pathway is cofactor degradation; B6 vitamer degradation; 4-pyridoxate from pyridoxal: step 1/2. In terms of biological role, involved in the degradation of pyridoxine or pyridoxamine (free, phosphate-unbound, forms of vitamin B6). Oxidizes pyridoxal to 4-pyridoxolactone, but does not have activity toward pyridoxal 5'-phosphate, pyridoxine, pyridoxamine, pyridoxamine 5'-phosphate, 4-phthalaldehyde, 2-nitrobenzaldehyde, pyridine, formaldehyde, 2-carboxybenzaldehyde or sugars. This is Pyridoxal 4-dehydrogenase from Mesorhizobium japonicum (strain LMG 29417 / CECT 9101 / MAFF 303099) (Mesorhizobium loti (strain MAFF 303099)).